The primary structure comprises 126 residues: UPF0102 protein BCAN_A0183 (126 aa).

This sequence belongs to the UPF0102 family.

The polypeptide is UPF0102 protein BCAN_A0183 (Brucella canis (strain ATCC 23365 / NCTC 10854 / RM-666)).